Here is a 733-residue protein sequence, read N- to C-terminus: DNA replication licensing factor Mcm5 (733 aa).

Residues 328-534 (IYERLSQSLA…RDITLAKHII (207 aa)) enclose the MCM domain. Arg368 contributes to the ADP binding site. The Arginine finger signature appears at 509 to 512 (SRFD).

The protein belongs to the MCM family. Component of the Mcm2-7 complex. The complex forms a toroidal hexameric ring with the proposed subunit order Mcm2-Mcm6-Mcm4-Mcm7-Mcm3-Mcm5.

It is found in the nucleus. It localises to the cytoplasm. The protein localises to the cytosol. It catalyses the reaction ATP + H2O = ADP + phosphate + H(+). Acts as a component of the Mcm2-7 complex (Mcm complex) which is the putative replicative helicase essential for 'once per cell cycle' DNA replication initiation and elongation in eukaryotic cells. Core component of CDC45-MCM-GINS (CMG) helicase, the molecular machine that unwinds template DNA during replication, and around which the replisome is built. The active ATPase sites in the Mcm2-7 ring are formed through the interaction surfaces of two neighboring subunits such that a critical structure of a conserved arginine finger motif is provided in trans relative to the ATP-binding site of the Walker A box of the adjacent subunit. The six ATPase active sites, however, are likely to contribute differentially to the complex helicase activity. The chain is DNA replication licensing factor Mcm5 (Mcm5) from Drosophila melanogaster (Fruit fly).